The primary structure comprises 221 residues: 7-cyano-7-deazaguanine synthase (221 aa).

10 to 20 (FSGGQDSTTCL) is a binding site for ATP. Cys-186, Cys-195, Cys-198, and Cys-201 together coordinate Zn(2+).

It belongs to the QueC family. Homodimer. Zn(2+) serves as cofactor.

It carries out the reaction 7-carboxy-7-deazaguanine + NH4(+) + ATP = 7-cyano-7-deazaguanine + ADP + phosphate + H2O + H(+). Its pathway is purine metabolism; 7-cyano-7-deazaguanine biosynthesis. Its function is as follows. Catalyzes the ATP-dependent conversion of 7-carboxy-7-deazaguanine (CDG) to 7-cyano-7-deazaguanine (preQ(0)). The sequence is that of 7-cyano-7-deazaguanine synthase from Anoxybacillus flavithermus (strain DSM 21510 / WK1).